The sequence spans 128 residues: Cytochrome c-type biogenesis protein CcmE (128 aa).

Topologically, residues 1–7 are cytoplasmic; it reads MKKKHKR. A helical; Signal-anchor for type II membrane protein membrane pass occupies residues 8 to 28; that stretch reads LLVASGIFFFLNCIVFFILTI. At 29–128 the chain is on the extracellular side; that stretch reads LRENISFFYT…KHDENYMPRK (100 aa). Residues histidine 120 and tyrosine 124 each contribute to the heme site.

The protein belongs to the CcmE/CycJ family.

It localises to the cell membrane. Heme chaperone required for the biogenesis of c-type cytochromes. Transiently binds heme delivered by CcmC and transfers the heme to apo-cytochromes in a process facilitated by CcmF and CcmH. This Wolbachia sp. subsp. Brugia malayi (strain TRS) protein is Cytochrome c-type biogenesis protein CcmE.